We begin with the raw amino-acid sequence, 489 residues long: Probable transporter MCH1 (489 aa).

12 consecutive transmembrane segments (helical) span residues 34 to 54 (ISLI…FTPV), 68 to 88 (IIGS…GYLA), 94 to 114 (VLLS…AATV), 124 to 144 (LAIS…TALL), 156 to 175 (LTIS…GSRV), 196 to 216 (FSFL…VVSI), 262 to 282 (ISTY…EMYI), 302 to 324 (VAIH…DFLV), 335 to 355 (LLSI…STFV), 359 to 379 (YYII…LYPT), 403 to 423 (IGST…CGVF), and 463 to 483 (SLII…ILRI).

The protein belongs to the major facilitator superfamily.

It localises to the vacuole membrane. Its function is as follows. Probable transporter. The chain is Probable transporter MCH1 (MCH1) from Wickerhamomyces anomalus (Yeast).